The following is a 213-amino-acid chain: Imidazole glycerol phosphate synthase subunit HisH (213 aa).

The region spanning 4–213 (SIAIVDYGMG…LYRNFVHWKP (210 aa)) is the Glutamine amidotransferase type-1 domain. The Nucleophile role is filled by cysteine 83. Catalysis depends on residues histidine 193 and glutamate 195.

In terms of assembly, heterodimer of HisH and HisF.

It is found in the cytoplasm. It carries out the reaction 5-[(5-phospho-1-deoxy-D-ribulos-1-ylimino)methylamino]-1-(5-phospho-beta-D-ribosyl)imidazole-4-carboxamide + L-glutamine = D-erythro-1-(imidazol-4-yl)glycerol 3-phosphate + 5-amino-1-(5-phospho-beta-D-ribosyl)imidazole-4-carboxamide + L-glutamate + H(+). It catalyses the reaction L-glutamine + H2O = L-glutamate + NH4(+). Its pathway is amino-acid biosynthesis; L-histidine biosynthesis; L-histidine from 5-phospho-alpha-D-ribose 1-diphosphate: step 5/9. In terms of biological role, IGPS catalyzes the conversion of PRFAR and glutamine to IGP, AICAR and glutamate. The HisH subunit catalyzes the hydrolysis of glutamine to glutamate and ammonia as part of the synthesis of IGP and AICAR. The resulting ammonia molecule is channeled to the active site of HisF. This chain is Imidazole glycerol phosphate synthase subunit HisH, found in Burkholderia lata (strain ATCC 17760 / DSM 23089 / LMG 22485 / NCIMB 9086 / R18194 / 383).